Consider the following 197-residue polypeptide: Large ribosomal subunit protein eL15 (197 aa).

Residues 175–197 (LRTGRKGSSKSRPSIRANGRLRR) form a disordered region.

It belongs to the eukaryotic ribosomal protein eL15 family.

In Thermoplasma volcanium (strain ATCC 51530 / DSM 4299 / JCM 9571 / NBRC 15438 / GSS1), this protein is Large ribosomal subunit protein eL15 (rpl15e).